An 88-amino-acid chain; its full sequence is Protein Aeq5-like1 (88 aa).

Positions 1-20 are cleaved as a signal peptide; the sequence is MKSVIAVLVLSLVLVNFTQA. 4 cysteine pairs are disulfide-bonded: cysteine 29–cysteine 68, cysteine 33–cysteine 64, cysteine 40–cysteine 56, and cysteine 47–cysteine 53.

As to expression, is expressed in the ectodermal cells of gastrulae and planulae. Is also noticeable in the endoderm in late planulae. In the primary polyps, is expressed in both ectoderm (sensory neurons) and endoderm (ganglions). Is not expressed in nematocytes.

Probable neuropeptide. This chain is Protein Aeq5-like1, found in Nematostella vectensis (Starlet sea anemone).